We begin with the raw amino-acid sequence, 163 residues long: Auxin-responsive protein IAA5 (163 aa).

Residues L15–L19 carry the EAR-like (transcriptional repression) motif. The 87-residue stretch at S74 to C160 folds into the PB1 domain.

This sequence belongs to the Aux/IAA family. In terms of assembly, homodimers and heterodimers. In terms of tissue distribution, highly expressed in stems and flowers.

Its subcellular location is the nucleus. In terms of biological role, aux/IAA proteins are short-lived transcriptional factors that function as repressors of early auxin response genes at low auxin concentrations. Repression is thought to result from the interaction with auxin response factors (ARFs), proteins that bind to the auxin-responsive promoter element (AuxRE). Formation of heterodimers with ARF proteins may alter their ability to modulate early auxin response genes expression. The protein is Auxin-responsive protein IAA5 (IAA5) of Arabidopsis thaliana (Mouse-ear cress).